The sequence spans 397 residues: Elongation factor Tu (397 aa).

A tr-type G domain is found at 10–207; the sequence is KPHVNVGTIG…TLDAYIPEPE (198 aa). Residues 19–26 form a G1 region; sequence GHVDHGKT. GTP is bound at residue 19-26; that stretch reads GHVDHGKT. Threonine 26 is a Mg(2+) binding site. The interval 60 to 64 is G2; sequence GITIA. The G3 stretch occupies residues 81–84; sequence DCPG. GTP-binding positions include 81–85 and 136–139; these read DCPGH and NKAD. Residues 136–139 are G4; that stretch reads NKAD. Residues 174–176 are G5; that stretch reads SAL.

The protein belongs to the TRAFAC class translation factor GTPase superfamily. Classic translation factor GTPase family. EF-Tu/EF-1A subfamily. As to quaternary structure, monomer.

The protein localises to the cytoplasm. It carries out the reaction GTP + H2O = GDP + phosphate + H(+). Its function is as follows. GTP hydrolase that promotes the GTP-dependent binding of aminoacyl-tRNA to the A-site of ribosomes during protein biosynthesis. The chain is Elongation factor Tu from Hahella chejuensis (strain KCTC 2396).